Reading from the N-terminus, the 270-residue chain is MAFTRIHSFLASAGNTSMYKRVWRFWYPLMTHKLGTDEIMFINWAYEEDPPMALPLEASDEPNRAHINLYHRTATQVNLSGKRILEVSCGHGGGASYLTRALHPASYTGLDLNPAGIKLCQKRHQLPGLEFVRGDAENLPFDNESFDVVINIEASHCYPHFPRFLAEVVRVLRPGGHLAYADLRPSNKVGEWEVDFANSRLQQLSQREINAEVLRGIASNSQKSRDLVDRHLPAFLRFAGREFIGVQGTQLSRYLEGGELSYRMYSFAKD.

Belongs to the methyltransferase superfamily. Phthiotriol/phenolphthiotriol dimycocerosates methyltransferase family.

Functionally, catalyzes the methylation of the lipid moiety of the intermediate compounds phthiotriol and glycosylated phenolphthiotriol dimycoserosates to form phthiocerol dimycocerosates (DIM A) and glycosylated phenolphthiocerol dimycocerosates (PGL). This chain is Phthiotriol/phenolphthiotriol dimycocerosates methyltransferase, found in Mycobacterium leprae (strain TN).